The following is a 433-amino-acid chain: 3-phosphoshikimate 1-carboxyvinyltransferase (433 aa).

The 3-phosphoshikimate site is built by lysine 22, serine 23, and arginine 27. Lysine 22 provides a ligand contact to phosphoenolpyruvate. The phosphoenolpyruvate site is built by glycine 96 and arginine 130. 3-phosphoshikimate contacts are provided by serine 176, serine 177, glutamine 178, serine 204, aspartate 319, asparagine 342, and lysine 346. A phosphoenolpyruvate-binding site is contributed by glutamine 178. Aspartate 319 serves as the catalytic Proton acceptor. Residues arginine 350, arginine 394, and lysine 419 each contribute to the phosphoenolpyruvate site.

This sequence belongs to the EPSP synthase family. In terms of assembly, monomer.

It is found in the cytoplasm. It catalyses the reaction 3-phosphoshikimate + phosphoenolpyruvate = 5-O-(1-carboxyvinyl)-3-phosphoshikimate + phosphate. Its pathway is metabolic intermediate biosynthesis; chorismate biosynthesis; chorismate from D-erythrose 4-phosphate and phosphoenolpyruvate: step 6/7. Its function is as follows. Catalyzes the transfer of the enolpyruvyl moiety of phosphoenolpyruvate (PEP) to the 5-hydroxyl of shikimate-3-phosphate (S3P) to produce enolpyruvyl shikimate-3-phosphate and inorganic phosphate. The protein is 3-phosphoshikimate 1-carboxyvinyltransferase of Actinobacillus succinogenes (strain ATCC 55618 / DSM 22257 / CCUG 43843 / 130Z).